A 354-amino-acid polypeptide reads, in one-letter code: Holliday junction branch migration complex subunit RuvB (354 aa).

A large ATPase domain (RuvB-L) region spans residues 1 to 183; sequence MTGDNLVSAY…FGFVAHLDFY (183 aa). ATP is bound by residues arginine 23, glycine 64, lysine 67, threonine 68, serine 69, 130 to 132, arginine 173, tyrosine 183, and arginine 220; that span reads EDF. A Mg(2+)-binding site is contributed by threonine 68. The tract at residues 184–254 is small ATPAse domain (RuvB-S); sequence SPADLETLLH…AARAALLVYD (71 aa). A head domain (RuvB-H) region spans residues 257–354; the sequence is ALGLDRLDRQ…DLFSVEPDQP (98 aa). Residues arginine 312 and arginine 317 each coordinate DNA. Residues 330-354 form a disordered region; sequence TPPNGIFGSDAPPASDLFSVEPDQP.

Belongs to the RuvB family. Homohexamer. Forms an RuvA(8)-RuvB(12)-Holliday junction (HJ) complex. HJ DNA is sandwiched between 2 RuvA tetramers; dsDNA enters through RuvA and exits via RuvB. An RuvB hexamer assembles on each DNA strand where it exits the tetramer. Each RuvB hexamer is contacted by two RuvA subunits (via domain III) on 2 adjacent RuvB subunits; this complex drives branch migration. In the full resolvosome a probable DNA-RuvA(4)-RuvB(12)-RuvC(2) complex forms which resolves the HJ.

It is found in the cytoplasm. The catalysed reaction is ATP + H2O = ADP + phosphate + H(+). Functionally, the RuvA-RuvB-RuvC complex processes Holliday junction (HJ) DNA during genetic recombination and DNA repair, while the RuvA-RuvB complex plays an important role in the rescue of blocked DNA replication forks via replication fork reversal (RFR). RuvA specifically binds to HJ cruciform DNA, conferring on it an open structure. The RuvB hexamer acts as an ATP-dependent pump, pulling dsDNA into and through the RuvAB complex. RuvB forms 2 homohexamers on either side of HJ DNA bound by 1 or 2 RuvA tetramers; 4 subunits per hexamer contact DNA at a time. Coordinated motions by a converter formed by DNA-disengaged RuvB subunits stimulates ATP hydrolysis and nucleotide exchange. Immobilization of the converter enables RuvB to convert the ATP-contained energy into a lever motion, pulling 2 nucleotides of DNA out of the RuvA tetramer per ATP hydrolyzed, thus driving DNA branch migration. The RuvB motors rotate together with the DNA substrate, which together with the progressing nucleotide cycle form the mechanistic basis for DNA recombination by continuous HJ branch migration. Branch migration allows RuvC to scan DNA until it finds its consensus sequence, where it cleaves and resolves cruciform DNA. This Salinispora arenicola (strain CNS-205) protein is Holliday junction branch migration complex subunit RuvB.